The chain runs to 257 residues: Golgi SNAP receptor complex member 1-2 (257 aa).

Residues 1 to 235 (MTESSLDLQE…GSIKRKRSRD (235 aa)) lie on the Cytoplasmic side of the membrane. At Asn-51 the chain carries Phosphoserine. Residues 113–147 (TQKLARHRDILHEYTQEFRRIKGNINSLREHAELL) are a coiled coil. The chain crosses the membrane as a helical; Anchor for type IV membrane protein span at residues 236–256 (TLILSAVIAACTLFLIIYWLS). Position 257 (Lys-257) is a topological domain, vesicular.

Belongs to the GOSR1 family. In terms of assembly, component of several multiprotein Golgi SNARE complexes.

The protein localises to the golgi apparatus membrane. The protein resides in the endoplasmic reticulum membrane. In terms of biological role, involved in transport from the ER to the Golgi apparatus as well as in intra-Golgi transport. It belongs to a super-family of proteins called t-SNAREs or soluble NSF (N-ethylmaleimide-sensitive factor) attachment protein receptor. This Arabidopsis thaliana (Mouse-ear cress) protein is Golgi SNAP receptor complex member 1-2 (GOS12).